The primary structure comprises 183 residues: ATP-dependent protease subunit HslV (183 aa).

T2 is an active-site residue. Na(+) contacts are provided by G157, C160, and T163.

This sequence belongs to the peptidase T1B family. HslV subfamily. As to quaternary structure, a double ring-shaped homohexamer of HslV is capped on each side by a ring-shaped HslU homohexamer. The assembly of the HslU/HslV complex is dependent on binding of ATP.

The protein resides in the cytoplasm. The catalysed reaction is ATP-dependent cleavage of peptide bonds with broad specificity.. Allosterically activated by HslU binding. In terms of biological role, protease subunit of a proteasome-like degradation complex believed to be a general protein degrading machinery. The chain is ATP-dependent protease subunit HslV from Vibrio parahaemolyticus serotype O3:K6 (strain RIMD 2210633).